A 164-amino-acid chain; its full sequence is Peptide deformylase (164 aa).

Fe cation contacts are provided by Cys-87 and His-129. Glu-130 is a catalytic residue. Fe cation is bound at residue His-133.

This sequence belongs to the polypeptide deformylase family. The cofactor is Fe(2+).

The enzyme catalyses N-terminal N-formyl-L-methionyl-[peptide] + H2O = N-terminal L-methionyl-[peptide] + formate. Functionally, removes the formyl group from the N-terminal Met of newly synthesized proteins. Requires at least a dipeptide for an efficient rate of reaction. N-terminal L-methionine is a prerequisite for activity but the enzyme has broad specificity at other positions. The chain is Peptide deformylase from Thermotoga petrophila (strain ATCC BAA-488 / DSM 13995 / JCM 10881 / RKU-1).